We begin with the raw amino-acid sequence, 264 residues long: Thymidylate synthase (264 aa).

Arg21 is a dUMP binding site. His51 contributes to the (6R)-5,10-methylene-5,6,7,8-tetrahydrofolate binding site. 126 to 127 contributes to the dUMP binding site; the sequence is RR. The active-site Nucleophile is the Cys146. DUMP contacts are provided by residues 166-169, Asn177, and 207-209; these read RSCD and HLY. Asp169 provides a ligand contact to (6R)-5,10-methylene-5,6,7,8-tetrahydrofolate. Ala263 contributes to the (6R)-5,10-methylene-5,6,7,8-tetrahydrofolate binding site.

It belongs to the thymidylate synthase family. Bacterial-type ThyA subfamily. As to quaternary structure, homodimer.

Its subcellular location is the cytoplasm. The catalysed reaction is dUMP + (6R)-5,10-methylene-5,6,7,8-tetrahydrofolate = 7,8-dihydrofolate + dTMP. The protein operates within pyrimidine metabolism; dTTP biosynthesis. Catalyzes the reductive methylation of 2'-deoxyuridine-5'-monophosphate (dUMP) to 2'-deoxythymidine-5'-monophosphate (dTMP) while utilizing 5,10-methylenetetrahydrofolate (mTHF) as the methyl donor and reductant in the reaction, yielding dihydrofolate (DHF) as a by-product. This enzymatic reaction provides an intracellular de novo source of dTMP, an essential precursor for DNA biosynthesis. This is Thymidylate synthase from Shewanella amazonensis (strain ATCC BAA-1098 / SB2B).